Here is a 470-residue protein sequence, read N- to C-terminus: Cysteine--tRNA ligase (470 aa).

C28 contacts Zn(2+). The 'HIGH' region signature appears at 30–40 (PTVYNYIHIGN). Residues C211, H236, and E240 each coordinate Zn(2+). Residues 270-274 (KMSKS) carry the 'KMSKS' region motif. K273 lines the ATP pocket.

It belongs to the class-I aminoacyl-tRNA synthetase family. Monomer. The cofactor is Zn(2+).

It localises to the cytoplasm. The enzyme catalyses tRNA(Cys) + L-cysteine + ATP = L-cysteinyl-tRNA(Cys) + AMP + diphosphate. The polypeptide is Cysteine--tRNA ligase (Enterococcus faecalis (strain ATCC 700802 / V583)).